Consider the following 177-residue polypeptide: Large ribosomal subunit protein uL6 (177 aa).

This sequence belongs to the universal ribosomal protein uL6 family. As to quaternary structure, part of the 50S ribosomal subunit.

This protein binds to the 23S rRNA, and is important in its secondary structure. It is located near the subunit interface in the base of the L7/L12 stalk, and near the tRNA binding site of the peptidyltransferase center. This is Large ribosomal subunit protein uL6 from Shewanella amazonensis (strain ATCC BAA-1098 / SB2B).